The sequence spans 185 residues: Elongation factor P (185 aa).

It belongs to the elongation factor P family.

It is found in the cytoplasm. The protein operates within protein biosynthesis; polypeptide chain elongation. Involved in peptide bond synthesis. Stimulates efficient translation and peptide-bond synthesis on native or reconstituted 70S ribosomes in vitro. Probably functions indirectly by altering the affinity of the ribosome for aminoacyl-tRNA, thus increasing their reactivity as acceptors for peptidyl transferase. The sequence is that of Elongation factor P from Salinispora tropica (strain ATCC BAA-916 / DSM 44818 / JCM 13857 / NBRC 105044 / CNB-440).